Reading from the N-terminus, the 309-residue chain is Aspartate carbamoyltransferase catalytic subunit (309 aa).

Carbamoyl phosphate contacts are provided by arginine 48 and threonine 49. Lysine 76 is an L-aspartate binding site. The carbamoyl phosphate site is built by arginine 98, histidine 128, and glutamine 131. Residues arginine 161 and arginine 211 each coordinate L-aspartate. Carbamoyl phosphate is bound by residues alanine 250 and proline 251.

The protein belongs to the aspartate/ornithine carbamoyltransferase superfamily. ATCase family. In terms of assembly, heterododecamer (2C3:3R2) of six catalytic PyrB chains organized as two trimers (C3), and six regulatory PyrI chains organized as three dimers (R2).

It catalyses the reaction carbamoyl phosphate + L-aspartate = N-carbamoyl-L-aspartate + phosphate + H(+). The protein operates within pyrimidine metabolism; UMP biosynthesis via de novo pathway; (S)-dihydroorotate from bicarbonate: step 2/3. In terms of biological role, catalyzes the condensation of carbamoyl phosphate and aspartate to form carbamoyl aspartate and inorganic phosphate, the committed step in the de novo pyrimidine nucleotide biosynthesis pathway. This is Aspartate carbamoyltransferase catalytic subunit from Oceanobacillus iheyensis (strain DSM 14371 / CIP 107618 / JCM 11309 / KCTC 3954 / HTE831).